Here is an 86-residue protein sequence, read N- to C-terminus: Small ribosomal subunit protein bS20 (86 aa).

This sequence belongs to the bacterial ribosomal protein bS20 family.

In terms of biological role, binds directly to 16S ribosomal RNA. This chain is Small ribosomal subunit protein bS20, found in Kocuria rhizophila (strain ATCC 9341 / DSM 348 / NBRC 103217 / DC2201).